The primary structure comprises 247 residues: MKNTELEQLINEKLNSAAISDYAPNGLQVEGKETVQKIVTGVTASQALLDEAVRLGADAVIVHHGYFWKGESPVIRGMKRNRLKTLLANDINLYGWHLPLDAHPELGNNAQLAALLGITVMGEIEPLVPWGELTMPVPGLELASWIEARLGRKPLWCGDTGPEVVQRVAWCTGGGQSFIDSAARFGVDAFITGEVSEQTIHSAREQGLHFYAAGHHATERGGIRALSEWLNENTDLDVTFIDIPNPA.

Positions 63, 64, 101, 215, and 219 each coordinate a divalent metal cation.

It belongs to the GTP cyclohydrolase I type 2/NIF3 family. As to quaternary structure, toroid-shaped homohexamer. In the hexamer, 3 dimers assemble to form a ring-like structure surrounding a central hole.

Functionally, provides significant protection from radiation damage and may be involved in the degradation of radiation-damaged nucleotides. In Escherichia coli O157:H7, this protein is GTP cyclohydrolase 1 type 2 homolog (ybgI).